The sequence spans 211 residues: Scoloptoxin SSD43 (211 aa).

A signal peptide spans 1–20; it reads MNFVIYGVIVVLTSQLYVDG.

Post-translationally, contains 3 disulfide bonds. As to expression, expressed by the venom gland.

The protein localises to the secreted. In terms of biological role, shows trypsin inhibiting activity. The protein is highly thermally stable, since its incubation in boiling water during 10 minutes does not reduce its activity. The sequence is that of Scoloptoxin SSD43 from Scolopendra dehaani (Thai centipede).